Here is an 880-residue protein sequence, read N- to C-terminus: Nonsense-mediated mRNA decay factor SMG7-like (880 aa).

TPR repeat units follow at residues 149 to 183 and 184 to 217; these read QEQY…NPHN and QLAV…GASN. Residues 669–711 form a disordered region; the sequence is RLGLSKPNGLGPIDETGPVSAFDSLSINSSTEHPASSYSPPTP. A compositionally biased stretch (polar residues) spans 691–701; that stretch reads DSLSINSSTEH.

May play a role in growth and development. In Arabidopsis thaliana (Mouse-ear cress), this protein is Nonsense-mediated mRNA decay factor SMG7-like.